The primary structure comprises 491 residues: Lysine--tRNA ligase (491 aa).

Glu-400 and Glu-407 together coordinate Mg(2+).

Belongs to the class-II aminoacyl-tRNA synthetase family. As to quaternary structure, homodimer. It depends on Mg(2+) as a cofactor.

The protein localises to the cytoplasm. It catalyses the reaction tRNA(Lys) + L-lysine + ATP = L-lysyl-tRNA(Lys) + AMP + diphosphate. The chain is Lysine--tRNA ligase from Mesomycoplasma hyopneumoniae (strain 7448) (Mycoplasma hyopneumoniae).